The sequence spans 139 residues: Proline-rich nuclear receptor coactivator 2 (139 aa).

Disordered stretches follow at residues 1-51 (MGGG…GYNS), 61-80 (NGGK…SLSG), and 89-110 (ANQN…LPKP). Composition is skewed to polar residues over residues 11 to 36 (APQS…NSQM) and 61 to 79 (NGGK…SSLS). The SH3-binding motif lies at 99–105 (SEPPSPS). A compositionally biased stretch (pro residues) spans 101-110 (PPSPSVLPKP).

The protein belongs to the PNRC family. PNRC2 subfamily. Interacts with UPF1/RENT1; preferentially interacts with hyperphosphorylated form. Interacts with DCP1A. Interacts with many nuclear receptors including ESR1, ESRRA, ESRRG, NR3C1/GR, NR5A1, PGR, TR, RAR and RXR. In terms of tissue distribution, expressed in heart, lung, muscle and brain.

The protein resides in the nucleus. The protein localises to the cytoplasm. Its subcellular location is the P-body. Functionally, involved in nonsense-mediated mRNA decay (NMD) by acting as a bridge between the mRNA decapping complex and the NMD machinery. May act by targeting the NMD machinery to the P-body and recruiting the decapping machinery to aberrant mRNAs. Required for UPF1/RENT1 localization to the P-body. Plays a role in glucocorticoid receptor-mediated mRNA degradation by interacting with the glucocorticoid receptor NR3C1 in a ligand-dependent manner when it is bound to the 5' UTR of target mRNAs and recruiting the RNA helicase UPF1 and the mRNA-decapping enzyme DCP1A, leading to RNA decay. Also acts as a nuclear receptor coactivator. May play a role in controlling the energy balance between energy storage and energy expenditure. The sequence is that of Proline-rich nuclear receptor coactivator 2 (PNRC2) from Homo sapiens (Human).